A 335-amino-acid chain; its full sequence is ATP-dependent 6-phosphofructokinase (335 aa).

Gly-11 lines the ATP pocket. 21 to 25 is an ADP binding site; sequence RAVVR. ATP-binding positions include 72-73 and 102-105; these read RY and GDGS. A Mg(2+)-binding site is contributed by Asp-103. 125–127 provides a ligand contact to substrate; it reads TID. The Proton acceptor role is filled by Asp-127. Residue Arg-154 participates in ADP binding. Residues Arg-162 and 169-171 each bind substrate; that span reads MGR. ADP contacts are provided by residues 185–187 and 213–215; these read GAD and KKH. Residues Glu-222, Arg-244, and 250-253 each bind substrate; that span reads HIQR.

Belongs to the phosphofructokinase type A (PFKA) family. ATP-dependent PFK group I subfamily. Prokaryotic clade 'B1' sub-subfamily. As to quaternary structure, homotetramer. Mg(2+) is required as a cofactor.

It localises to the cytoplasm. It carries out the reaction beta-D-fructose 6-phosphate + ATP = beta-D-fructose 1,6-bisphosphate + ADP + H(+). The protein operates within carbohydrate degradation; glycolysis; D-glyceraldehyde 3-phosphate and glycerone phosphate from D-glucose: step 3/4. With respect to regulation, allosterically activated by ADP and other diphosphonucleosides, and allosterically inhibited by phosphoenolpyruvate. Its function is as follows. Catalyzes the phosphorylation of D-fructose 6-phosphate to fructose 1,6-bisphosphate by ATP, the first committing step of glycolysis. The chain is ATP-dependent 6-phosphofructokinase from Streptococcus pneumoniae serotype 19F (strain G54).